The chain runs to 197 residues: dTTP/UTP pyrophosphatase (197 aa).

The active-site Proton acceptor is the Asp70.

It belongs to the Maf family. YhdE subfamily. A divalent metal cation is required as a cofactor.

It is found in the cytoplasm. It catalyses the reaction dTTP + H2O = dTMP + diphosphate + H(+). The enzyme catalyses UTP + H2O = UMP + diphosphate + H(+). In terms of biological role, nucleoside triphosphate pyrophosphatase that hydrolyzes dTTP and UTP. May have a dual role in cell division arrest and in preventing the incorporation of modified nucleotides into cellular nucleic acids. This Yersinia pestis bv. Antiqua (strain Antiqua) protein is dTTP/UTP pyrophosphatase.